We begin with the raw amino-acid sequence, 129 residues long: MADAAVGKEKCGDQRLVSLPLSRIRVIMKSSPEVSSINQEALVLTAKATELFVQYLATCSYRHGSGKAKKALTYSDLASTAEDSETLQFLADILPKKILASKYLKMLKEKREEEEDNEDDGSDLGEALA.

Ala-2 bears the N-acetylalanine mark. Lys-102 carries the N6-acetyllysine modification. Positions 104–120 (LKMLKEKREEEEDNEDD) form a coiled coil. The interval 109–129 (EKREEEEDNEDDGSDLGEALA) is disordered. Residues 112–123 (EEEEDNEDDGSD) show a composition bias toward acidic residues. Ser-122 carries the post-translational modification Phosphoserine.

In terms of assembly, heterodimer with POLE3; binds to DNA. Component of the CHRAC ISWI chromatin remodeling complex at least composed of SMARCA5/SNF2H, BAZ1A/ACF1, CHRAC1 and POLE3; the complex preferentially binds DNA through the CHRAC1-POLE3 heterodimer and possesses ATP-dependent nucleosome-remodeling activity. Within the complex, the heterodimer with POLE3 interacts with SMARCA5/SNF2H; the interaction is direct and enhances nucleosome sliding activity by the SMARCA5/SNF2H and BAZ1A/ACF1 interaction. Within the complex, the heterodimer with POLE3 interacts with BAZ1A/ACF1; the interactions are direct. As to expression, ubiquitously expressed.

The protein resides in the nucleus. Forms a complex with DNA polymerase epsilon subunit POLE3 and binds naked DNA, which is then incorporated into chromatin, aided by the nucleosome remodeling activity of ISWI/SNF2H and ACF1. Does not enhance nucleosome sliding activity of the ACF-5 ISWI chromatin remodeling complex. The protein is Chromatin accessibility complex protein 1 (Chrac1) of Mus musculus (Mouse).